We begin with the raw amino-acid sequence, 175 residues long: Centrosomal protein 20 (175 aa).

The segment at 1–104 (MATIAELKAV…IVEDANGKSV (104 aa)) is necessary and sufficient for homooligomerization and localization to centrosomes and pericentriolar satellites. Residues 49–81 (ENLLINELIREYLEFNKYKYSASVLTAEAGQPE) form the LisH domain. Positions 137 to 166 (RQNLAKPSTERNQKDRIPEPGRMAGTSIEE) are disordered. Over residues 144–155 (STERNQKDRIPE) the composition is skewed to basic and acidic residues.

It belongs to the CEP43 family. As to quaternary structure, homooligomer; probably required for localization to centrosomes.

Its subcellular location is the cell projection. The protein localises to the cilium. The protein resides in the cytoplasm. It localises to the cytoskeleton. It is found in the cilium basal body. Its subcellular location is the microtubule organizing center. The protein localises to the centrosome. The protein resides in the cytoplasmic granule. It localises to the centriolar satellite. Involved in the biogenesis of cilia. Required for the recruitment of PLK1 to centrosomes and S phase progression. This chain is Centrosomal protein 20 (CEP20), found in Gallus gallus (Chicken).